Here is a 169-residue protein sequence, read N- to C-terminus: Keratin-associated protein 9-7 (169 aa).

Repeat copies occupy residues 8–12 (CCQPT), 13–17 (CCRTT), 32–36 (CCQPS), 37–41 (CCVSS), 46–50 (CCHPT), 51–55 (CCQNT), 56–60 (CCRTT), 61–65 (CCQPT), 75–79 (CCSTP), 80–84 (CCQPI), 85–89 (CCGSS), 90–94 (CCGQT), 100–104 (CCQPS), 139–143 (CCRPA), 144–148 (CCETT), 149–153 (CCRTT), and 163–167 (CCQPA). The segment at 8–167 (CCQPTCCRTT…TCVTSCCQPA (160 aa)) is 17 X 5 AA repeats of C-C-[VGSREQH]-[SQTPN]-[STPAI].

This sequence belongs to the KRTAP type 9 family. Interacts with hair keratins.

In the hair cortex, hair keratin intermediate filaments are embedded in an interfilamentous matrix, consisting of hair keratin-associated proteins (KRTAP), which are essential for the formation of a rigid and resistant hair shaft through their extensive disulfide bond cross-linking with abundant cysteine residues of hair keratins. The matrix proteins include the high-sulfur and high-glycine-tyrosine keratins. This Homo sapiens (Human) protein is Keratin-associated protein 9-7.